Reading from the N-terminus, the 189-residue chain is Probable nicotinate-nucleotide adenylyltransferase (189 aa).

It belongs to the NadD family.

The catalysed reaction is nicotinate beta-D-ribonucleotide + ATP + H(+) = deamido-NAD(+) + diphosphate. Its pathway is cofactor biosynthesis; NAD(+) biosynthesis; deamido-NAD(+) from nicotinate D-ribonucleotide: step 1/1. Catalyzes the reversible adenylation of nicotinate mononucleotide (NaMN) to nicotinic acid adenine dinucleotide (NaAD). The polypeptide is Probable nicotinate-nucleotide adenylyltransferase (Bacillus cereus (strain Q1)).